Reading from the N-terminus, the 940-residue chain is Isoleucine--tRNA ligase (940 aa).

Residues 58 to 68 (PYANGSIHIGH) carry the 'HIGH' region motif. Residue E564 coordinates L-isoleucyl-5'-AMP. Residues 605-609 (KMSKS) carry the 'KMSKS' region motif. Residue K608 participates in ATP binding. 4 residues coordinate Zn(2+): C903, C906, C923, and C926.

Belongs to the class-I aminoacyl-tRNA synthetase family. IleS type 1 subfamily. Monomer. Zn(2+) is required as a cofactor.

Its subcellular location is the cytoplasm. It carries out the reaction tRNA(Ile) + L-isoleucine + ATP = L-isoleucyl-tRNA(Ile) + AMP + diphosphate. Functionally, catalyzes the attachment of isoleucine to tRNA(Ile). As IleRS can inadvertently accommodate and process structurally similar amino acids such as valine, to avoid such errors it has two additional distinct tRNA(Ile)-dependent editing activities. One activity is designated as 'pretransfer' editing and involves the hydrolysis of activated Val-AMP. The other activity is designated 'posttransfer' editing and involves deacylation of mischarged Val-tRNA(Ile). This is Isoleucine--tRNA ligase from Shewanella putrefaciens (strain CN-32 / ATCC BAA-453).